A 591-amino-acid polypeptide reads, in one-letter code: Probable indole-3-acetic acid-amido synthetase GH3.11 (591 aa).

Belongs to the IAA-amido conjugating enzyme family. Expressed in etiolated and green seedlings, roots, callus and highly in flowers.

Its function is as follows. May catalyze the synthesis of indole-3-acetic acid (IAA)-amino acid conjugates, providing a mechanism for the plant to cope with the presence of excess auxin. The chain is Probable indole-3-acetic acid-amido synthetase GH3.11 (GH3.11) from Oryza sativa subsp. japonica (Rice).